Here is a 347-residue protein sequence, read N- to C-terminus: Calcium homeostasis modulator protein 3 (347 aa).

Residues methionine 1–asparagine 20 are Cytoplasmic-facing. The tract at residues glutamine 9 to serine 36 is central pore. A helical transmembrane segment spans residues glycine 21–serine 36. The Extracellular portion of the chain corresponds to leucine 37–asparagine 48. Intrachain disulfides connect cysteine 41–cysteine 126 and cysteine 43–cysteine 157. A helical membrane pass occupies residues alanine 49–asparagine 71. Over arginine 72–methionine 98 the chain is Cytoplasmic. A lipid anchor (S-palmitoyl cysteine) is attached at cysteine 99. The chain crosses the membrane as a helical span at residues cysteine 99 to phenylalanine 124. Residues valine 125 to leucine 176 are Extracellular-facing. N-linked (GlcNAc...) asparagine glycosylation occurs at asparagine 142. Residues arginine 177–arginine 202 traverse the membrane as a helical segment. Residues cysteine 200 and cysteine 204 are each lipidated (S-palmitoyl cysteine). At proline 203–valine 347 the chain is on the cytoplasmic side. The segment at glycine 265–alanine 290 is disordered. Positions proline 277–glycine 286 are enriched in basic and acidic residues.

It belongs to the CALHM family. Associates with CALHM1 as a pore-forming subunit in a hetero-hexameric channel complex. In terms of processing, N-glycosylated. Palmitoylated by ZDHHC3 and ZDHHC15. Palmitoylation positively regulates CALHM1:CALHM3 channel conductance. In terms of tissue distribution, expressed in taste bud cells.

It is found in the basolateral cell membrane. It catalyses the reaction ATP(in) = ATP(out). It carries out the reaction Ca(2+)(in) = Ca(2+)(out). The catalysed reaction is Na(+)(in) = Na(+)(out). The enzyme catalyses K(+)(in) = K(+)(out). It catalyses the reaction chloride(in) = chloride(out). Functionally, pore-forming subunit of gustatory voltage-gated ion channels required for sensory perception of sweet, bitter and umami tastes. With CALHM1 forms a fast-activating voltage-gated ATP-release channel in type II taste bud cells, ATP acting as a neurotransmitter to activate afferent neural gustatory pathways. Acts both as a voltage-gated and calcium-activated ion channel: mediates neuronal excitability in response to membrane depolarization and low extracellular Ca(2+) concentration. Has poor ion selectivity and forms a wide pore (around 14 Angstroms) that mediates permeation of small ions including Ca(2+), Na(+), K(+) and Cl(-), as well as larger ions such as ATP(4-). The protein is Calcium homeostasis modulator protein 3 of Mus musculus (Mouse).